Reading from the N-terminus, the 110-residue chain is T cell receptor alpha variable 35 (110 aa).

Positions 1 to 19 (MLLEHLLIILWMQLTWVSG) are cleaved as a signal peptide. The 91-residue stretch at 20 to 110 (QQLNQSPQSM…DVGIYFCAGQ (91 aa)) folds into the Ig-like domain. Asparagine 40 and asparagine 93 each carry an N-linked (GlcNAc...) asparagine glycan. Cysteine 41 and cysteine 107 are oxidised to a cystine.

As to quaternary structure, alpha-beta TR is a heterodimer composed of an alpha and beta chain; disulfide-linked. The alpha-beta TR is associated with the transmembrane signaling CD3 coreceptor proteins to form the TR-CD3 (TcR or TCR). The assembly of alpha-beta TR heterodimers with CD3 occurs in the endoplasmic reticulum where a single alpha-beta TR heterodimer associates with one CD3D-CD3E heterodimer, one CD3G-CD3E heterodimer and one CD247 homodimer forming a stable octameric structure. CD3D-CD3E and CD3G-CD3E heterodimers preferentially associate with TR alpha and TR beta chains, respectively. The association of the CD247 homodimer is the last step of TcR assembly in the endoplasmic reticulum and is required for transport to the cell surface.

The protein localises to the cell membrane. Functionally, v region of the variable domain of T cell receptor (TR) alpha chain that participates in the antigen recognition. Alpha-beta T cell receptors are antigen specific receptors which are essential to the immune response and are present on the cell surface of T lymphocytes. Recognize peptide-major histocompatibility (MH) (pMH) complexes that are displayed by antigen presenting cells (APC), a prerequisite for efficient T cell adaptive immunity against pathogens. Binding of alpha-beta TR to pMH complex initiates TR-CD3 clustering on the cell surface and intracellular activation of LCK that phosphorylates the ITAM motifs of CD3G, CD3D, CD3E and CD247 enabling the recruitment of ZAP70. In turn ZAP70 phosphorylates LAT, which recruits numerous signaling molecules to form the LAT signalosome. The LAT signalosome propagates signal branching to three major signaling pathways, the calcium, the mitogen-activated protein kinase (MAPK) kinase and the nuclear factor NF-kappa-B (NF-kB) pathways, leading to the mobilization of transcription factors that are critical for gene expression and essential for T cell growth and differentiation. The T cell repertoire is generated in the thymus, by V-(D)-J rearrangement. This repertoire is then shaped by intrathymic selection events to generate a peripheral T cell pool of self-MH restricted, non-autoaggressive T cells. Post-thymic interaction of alpha-beta TR with the pMH complexes shapes TR structural and functional avidity. The chain is T cell receptor alpha variable 35 from Homo sapiens (Human).